Here is a 2073-residue protein sequence, read N- to C-terminus: Dedicator of cytokinesis protein 11 (2073 aa).

Phosphoserine is present on Ser12. Position 16 is a phosphothreonine (Thr16). 2 positions are modified to phosphoserine: Ser23 and Ser161. Residues 165–272 (GVIKQGWLHK…WLITLKKIIQ (108 aa)) form the PH domain. Tyr248 carries the phosphotyrosine modification. Residues Ser306, Ser440, and Ser445 each carry the phosphoserine modification. Residues 640–818 (KNHLYVYPLQ…PLLKIKSHLE (179 aa)) enclose the C2 DOCK-type domain. Positions 1226-1267 (FQNGHGIKREDSRGSLIPEGATGFPDQGNTGENTRQSSTRSS) are disordered. Phosphoserine occurs at positions 1237 and 1240. Residues 1609–2036 (KSYASTPELR…LSDIIHEQIL (428 aa)) form the DOCKER domain.

Belongs to the DOCK family. As to quaternary structure, interacts with CDC42.

In terms of biological role, guanine nucleotide-exchange factor (GEF) that activates CDC42 by exchanging bound GDP for free GTP. Required for marginal zone (MZ) B-cell development, is associated with early bone marrow B-cell development, MZ B-cell formation, MZ B-cell number and marginal metallophilic macrophages morphology. Facilitates filopodia formation through the activation of CDC42. This chain is Dedicator of cytokinesis protein 11, found in Homo sapiens (Human).